We begin with the raw amino-acid sequence, 1941 residues long: Integrin beta-like protein B (1941 aa).

The N-terminal stretch at 1 to 20 is a signal peptide; sequence MKNIIKYLFIFLCFLIITEA. The Extracellular portion of the chain corresponds to 21–1871; that stretch reads THFRYGTISW…VTTQNSSNKT (1851 aa). The region spanning 420–457 is the EGF-like domain; that stretch reads YGDKCTVLPPCKNGVPNGGVNGDGKCLCNNGWTGSDCS. Cystine bridges form between C430–C445 and C447–C456. In terms of domain architecture, VWFA spans 513 to 696; sequence DVYLLVDANM…AGIKAVSSKL (184 aa). 10 N-linked (GlcNAc...) asparagine glycosylation sites follow: N1400, N1505, N1530, N1606, N1652, N1738, N1777, N1848, N1866, and N1869. The chain crosses the membrane as a helical span at residues 1872–1892; the sequence is VLSGAIAGAAAGTALIAAAMW. The Cytoplasmic segment spans residues 1893–1941; sequence KMLRKAAPPTDAFFDEGAFLGDGVNSNPMYQESKNGGENPLYLASNETL. A disordered region spans residues 1921–1941; sequence MYQESKNGGENPLYLASNETL.

Belongs to the SIB family. Interacts with talA/talin.

Its subcellular location is the membrane. In terms of biological role, implicated in cellular adhesion. The polypeptide is Integrin beta-like protein B (sibB) (Dictyostelium discoideum (Social amoeba)).